The following is a 338-amino-acid chain: mRNA decay activator protein ZFP36L1 (338 aa).

A necessary and sufficient for the association with mRNA decay enzymes and mRNA decay activation region spans residues 1–111; sequence MTTTLVSATI…QKQPGGGQVN (111 aa). Position 54 is a phosphoserine; by MAPKAPK2 (S54). The residue at position 90 (S90) is a Phosphoserine; by PKB/AKT1. Residue S92 is modified to Phosphoserine; by PKB/AKT1 and MAPKAPK2. A disordered region spans residues 93 to 113; the sequence is EGGERLLPTQKQPGGGQVNSS. 2 C3H1-type zinc fingers span residues 114–142 and 152–180; these read RYKT…HGIH and KYKT…HNAE. The necessary for mRNA decay activation stretch occupies residues 185 to 338; the sequence is LAGARDLSAD…IFSRLSISDD (154 aa). Position 203 is a phosphoserine; by PKB/AKT1 and MAPKAPK2 (S203). The disordered stretch occupies residues 273–338; that stretch reads SPTTFLFRPM…IFSRLSISDD (66 aa). The segment covering 296-318 has biased composition (low complexity); sequence QDSLSDQEGYLSSSSSSHSGSDS. Phosphoserine is present on S318. The residue at position 334 (S334) is a Phosphoserine; by RPS6KA1.

As to quaternary structure, associates with the cytoplasmic CCR4-NOT deadenylase and RNA exosome complexes to trigger ARE-containing mRNA deadenylation and decay processes. Interacts with CNOT1. Interacts (via N-terminus) with CNOT6. Interacts with CNOT7; this interaction is inhibited in response to phorbol 12-myristate 13-acetate (PMA) treatment in a p38 MAPK-dependent manner. Interacts with DCP1A. Interacts (via N-terminus) with DCP2. Interacts (via N-terminus) with EXOSC2. Interacts with XRN1. Interacts (via phosphorylated form) with YWHAB; this interaction occurs in a protein kinase AKT1-dependent manner. Interacts (via phosphorylated form) with YWHAZ; this interaction occurs in a p38 MAPK- and AKT-signaling pathways. In terms of processing, phosphorylated. Phosphorylated by RPS6KA1 at Ser-334 upon phorbol 12-myristate 13-acetate (PMA) treatment; this phosphorylation results in dissociation of the CCR4-NOT deadenylase complex and induces p38 MAPK-mediated stabilization of the low-density lipoprotein receptor LDLR mRNA. Phosphorylated by protein kinase AKT1 at Ser-92 and Ser-203 in response to insulin; these phosphorylations stabilize ZFP36L1, increase the association with 14-3-3 proteins and mediate ARE-containing mRNA stabilization. AKT1-mediated phosphorylation at Ser-92 does not impair ARE-containing RNA-binding. Phosphorylated at Ser-54, Ser-92 and Ser-203 by MAPKAPK2; these phosphorylations increase the association with 14-3-3 proteins and mediate ARE-containing mRNA stabilization in a protein kinase AKT1-independent manner. MAPKAPK2-mediated phosphorylations at Ser-54, Ser-92 and Ser-203 do not impair ARE-containing RNA-binding. Phosphorylations increase the association with 14-3-3 proteins and mediate ARE-containing mRNA stabilization during early adipogenesis in a p38 MAPK- and AKT-dependent manner. Post-translationally, ubiquitinated. Ubiquitination leads to proteasomal degradation, a process inhibited by phosphorylations at Ser-90, Ser-92 and Ser-203. As to expression, expressed mainly in the basal epidermal layer, weakly in the suprabasal epidermal layers. Expressed in epidermal keratinocytes (at protein level). Expressed in osteoblasts.

The protein resides in the nucleus. It is found in the cytoplasm. Its subcellular location is the cytoplasmic granule. The protein localises to the P-body. In terms of biological role, zinc-finger RNA-binding protein that destabilizes several cytoplasmic AU-rich element (ARE)-containing mRNA transcripts by promoting their poly(A) tail removal or deadenylation, and hence provide a mechanism for attenuating protein synthesis. Acts as a 3'-untranslated region (UTR) ARE mRNA-binding adapter protein to communicate signaling events to the mRNA decay machinery. Functions by recruiting the CCR4-NOT deadenylase complex and components of the cytoplasmic RNA decay machinery to the bound ARE-containing mRNAs, and hence promotes ARE-mediated mRNA deadenylation and decay processes. Also induces the degradation of ARE-containing mRNAs even in absence of poly(A) tail. Binds to 3'-UTR ARE of numerous mRNAs. Positively regulates early adipogenesis by promoting ARE-mediated mRNA decay of immediate early genes (IEGs). Promotes ARE-mediated mRNA decay of mineralocorticoid receptor NR3C2 mRNA in response to hypertonic stress. Negatively regulates hematopoietic/erythroid cell differentiation by promoting ARE-mediated mRNA decay of the transcription factor STAT5B mRNA. Positively regulates monocyte/macrophage cell differentiation by promoting ARE-mediated mRNA decay of the cyclin-dependent kinase CDK6 mRNA. Promotes degradation of ARE-containing pluripotency-associated mRNAs in embryonic stem cells (ESCs), such as NANOG, through a fibroblast growth factor (FGF)-induced MAPK-dependent signaling pathway, and hence attenuates ESC self-renewal and positively regulates mesendoderm differentiation. May play a role in mediating pro-apoptotic effects in malignant B-cells by promoting ARE-mediated mRNA decay of BCL2 mRNA. In association with ZFP36L2 maintains quiescence on developing B lymphocytes by promoting ARE-mediated decay of several mRNAs encoding cell cycle regulators that help B cells progress through the cell cycle, and hence ensuring accurate variable-diversity-joining (VDJ) recombination and functional immune cell formation. Together with ZFP36L2 is also necessary for thymocyte development and prevention of T-cell acute lymphoblastic leukemia (T-ALL) transformation by promoting ARE-mediated mRNA decay of the oncogenic transcription factor NOTCH1 mRNA. Participates in the delivery of target ARE-mRNAs to processing bodies (PBs). In addition to its cytosolic mRNA-decay function, plays a role in the regulation of nuclear mRNA 3'-end processing; modulates mRNA 3'-end maturation efficiency of the DLL4 mRNA through binding with an ARE embedded in a weak noncanonical polyadenylation (poly(A)) signal in endothelial cells. Also involved in the regulation of stress granule (SG) and P-body (PB) formation and fusion. Plays a role in vasculogenesis and endocardial development. Plays a role in the regulation of keratinocyte proliferation, differentiation and apoptosis. Plays a role in myoblast cell differentiation. This chain is mRNA decay activator protein ZFP36L1, found in Homo sapiens (Human).